The primary structure comprises 528 residues: Benzoylformate decarboxylase (528 aa).

Positions 117 and 118 each coordinate Mg(2+). Positions 377 to 460 (TSTVTAFWQR…IILKNGTYGA (84 aa)) are thiamine pyrophosphate binding. The Ca(2+) site is built by D428, N455, and T457.

This sequence belongs to the TPP enzyme family. As to quaternary structure, homotetramer. It depends on Ca(2+) as a cofactor. Thiamine diphosphate is required as a cofactor. Mg(2+) serves as cofactor.

It carries out the reaction phenylglyoxylate + H(+) = benzaldehyde + CO2. It functions in the pathway aromatic compound metabolism; (R)-mandelate degradation; benzoate from (R)-mandelate: step 3/4. This Pseudomonas aeruginosa (strain ATCC 15692 / DSM 22644 / CIP 104116 / JCM 14847 / LMG 12228 / 1C / PRS 101 / PAO1) protein is Benzoylformate decarboxylase (mdlC).